Consider the following 81-residue polypeptide: Sulfur carrier protein TusA (81 aa).

The active-site Cysteine persulfide intermediate is C19.

Belongs to the sulfur carrier protein TusA family.

The protein localises to the cytoplasm. Functionally, sulfur carrier protein which probably makes part of a sulfur-relay system. The sequence is that of Sulfur carrier protein TusA from Shewanella baltica (strain OS185).